The sequence spans 642 residues: Sterol O-acyltransferase 2 (642 aa).

The tract at residues 174–194 is disordered; sequence KSSPDAVDSVGKNDGAAPTTV. 2 positions are modified to phosphoserine: S175 and S176. The next 5 helical transmembrane spans lie at 215-235, 292-312, 404-424, 442-462, and 485-505; these read FSGL…KALI, TGWI…MYLT, ISAK…QIEY, IFGT…PVAM, and LLVD…YLIW. An FYXDWWN motif motif is present at residues 523–529; the sequence is FYGDWWN. 2 consecutive transmembrane segments (helical) span residues 567 to 587 and 622 to 642; these read ATLM…YVIF and VIFW…YLTF. The active site involves H579.

This sequence belongs to the membrane-bound acyltransferase family. Sterol o-acyltransferase subfamily.

It is found in the endoplasmic reticulum membrane. It catalyses the reaction ergosterol + an acyl-CoA = ergosteryl ester + CoA. The catalysed reaction is zymosterol + an acyl-CoA = zymosterol ester + CoA. Functionally, sterol O-acyltransferase that catalyzes the formation of stery esters. The sequence is that of Sterol O-acyltransferase 2 from Saccharomyces cerevisiae (strain ATCC 204508 / S288c) (Baker's yeast).